The primary structure comprises 244 residues: Adenosylcobinamide-GDP ribazoletransferase (244 aa).

The next 5 membrane-spanning stretches (helical) occupy residues 31–51 (LLCY…ASHL), 55–75 (APAP…SGAL), 109–129 (IAVV…WVLV), 133–153 (AGAL…GLFL), and 188–208 (LLLG…VFLW).

The protein belongs to the CobS family. It depends on Mg(2+) as a cofactor.

The protein localises to the cell inner membrane. The enzyme catalyses alpha-ribazole + adenosylcob(III)inamide-GDP = adenosylcob(III)alamin + GMP + H(+). The catalysed reaction is alpha-ribazole 5'-phosphate + adenosylcob(III)inamide-GDP = adenosylcob(III)alamin 5'-phosphate + GMP + H(+). The protein operates within cofactor biosynthesis; adenosylcobalamin biosynthesis; adenosylcobalamin from cob(II)yrinate a,c-diamide: step 7/7. Its function is as follows. Joins adenosylcobinamide-GDP and alpha-ribazole to generate adenosylcobalamin (Ado-cobalamin). Also synthesizes adenosylcobalamin 5'-phosphate from adenosylcobinamide-GDP and alpha-ribazole 5'-phosphate. In Pseudomonas putida (strain W619), this protein is Adenosylcobinamide-GDP ribazoletransferase.